Consider the following 386-residue polypeptide: Succinate--CoA ligase [ADP-forming] subunit beta (386 aa).

Residues Lys-9–Glu-244 form the ATP-grasp domain. ATP is bound by residues Lys-46, Gly-53–Gly-55, Glu-99, Cys-102, and Glu-107. 2 residues coordinate Mg(2+): Asn-199 and Asp-213. Substrate is bound by residues Asn-264 and Gly-321–Met-323.

Belongs to the succinate/malate CoA ligase beta subunit family. Heterotetramer of two alpha and two beta subunits. Requires Mg(2+) as cofactor.

It carries out the reaction succinate + ATP + CoA = succinyl-CoA + ADP + phosphate. The enzyme catalyses GTP + succinate + CoA = succinyl-CoA + GDP + phosphate. It participates in carbohydrate metabolism; tricarboxylic acid cycle; succinate from succinyl-CoA (ligase route): step 1/1. In terms of biological role, succinyl-CoA synthetase functions in the citric acid cycle (TCA), coupling the hydrolysis of succinyl-CoA to the synthesis of either ATP or GTP and thus represents the only step of substrate-level phosphorylation in the TCA. The beta subunit provides nucleotide specificity of the enzyme and binds the substrate succinate, while the binding sites for coenzyme A and phosphate are found in the alpha subunit. In Bacillus cytotoxicus (strain DSM 22905 / CIP 110041 / 391-98 / NVH 391-98), this protein is Succinate--CoA ligase [ADP-forming] subunit beta.